The following is a 523-amino-acid chain: Sodium-dependent lysophosphatidylcholine symporter 1-B (523 aa).

Residues 1–34 (MAKGEGAEQYTNTSLLQKPSPDEVKLAKHETKSR) lie on the Cytoplasmic side of the membrane. The chain crosses the membrane as a helical span at residues 35-64 (LSVCSKLCYAIGGAPYQITGCAIGFFLQIY). Over 65 to 75 (LLDVALLDPFY) the chain is Extracellular. A helical transmembrane segment spans residues 76-96 (ASIILFVGRAWDAVTDPTVGF). The Cytoplasmic segment spans residues 97-108 (LVSRTPWTRFGR). The helical transmembrane segment at 109 to 128 (MMPWIVLSTPFAVLCYFLIW) threads the bilayer. The Extracellular segment spans residues 129 to 138 (YVPSVDQGKV). The helical transmembrane segment at 139–163 (VWYLIFYCCFQTLQTCFHVPYSALT) threads the bilayer. Topologically, residues 164-170 (MFISTEQ) are cytoplasmic. A helical transmembrane segment spans residues 171 to 202 (KERDSATAYRMTVEVLGTLIGTAIQGQIVGMA). Topologically, residues 203–226 (NAPCISTEIDLNSTGLEVAPDVNI) are extracellular. A disulfide bridge links Cys-206 with Cys-457. Asn-214 and Asn-225 each carry an N-linked (GlcNAc...) asparagine glycan. Residues 227–260 (TDPHVSLQDLRNAYMIASGVICAIYVVCAVVLFL) traverse the membrane as a helical segment. The Cytoplasmic segment spans residues 261-290 (GVKEQKDTCRVRTEPMSFFQGICMVMGHGP). A helical membrane pass occupies residues 291–317 (YAKLVMGFLFTSLAFMLLEGNFALFCI). Over 318 to 328 (YNLGFRNDFQN) the chain is Extracellular. The chain crosses the membrane as a helical span at residues 329–347 (VLLVIMLSATLAIPFWQWF). Over 348–351 (LTKF) the chain is Cytoplasmic. The helical transmembrane segment at 352 to 373 (GKKTAVYIGTTSVVPFLISVVL) threads the bilayer. Residues 374–376 (VPS) are Extracellular-facing. Residues 377 to 413 (SLAVTYIASFAAGVSVAAAFLLPWSMLPDVVDDFKVQ) form a helical membrane-spanning segment. At 414–423 (NPESQGHEAI) the chain is on the cytoplasmic side. The chain crosses the membrane as a helical span at residues 424 to 450 (FYSFYVFFTKFASGVSLGVSTLSLDFA). At 451-462 (GYVTRGCTQPGE) the chain is on the extracellular side. Residues 463-486 (VKLTLKILVSAAPIVLIIIGLLIF) traverse the membrane as a helical segment. The Cytoplasmic portion of the chain corresponds to 487–523 (ISYPINEEKRQGNRKLLNEQRENEMDSETDSTELNVV). The interval 504 to 523 (NEQRENEMDSETDSTELNVV) is disordered.

The protein belongs to the major facilitator superfamily. As to expression, expressed in the developing nervous system.

It is found in the cell membrane. The protein localises to the endoplasmic reticulum membrane. The catalysed reaction is a 1-acyl-sn-glycero-3-phosphocholine(in) + Na(+)(in) = a 1-acyl-sn-glycero-3-phosphocholine(out) + Na(+)(out). It carries out the reaction 1-(4Z,7Z,10Z,13Z,16Z,19Z-docosahexaenoyl)-sn-glycero-3-phosphocholine(in) + Na(+)(in) = 1-(4Z,7Z,10Z,13Z,16Z,19Z-docosahexaenoyl)-sn-glycero-3-phosphocholine(out) + Na(+)(out). It catalyses the reaction 1-(9Z-octadecenoyl)-sn-glycero-3-phosphocholine(in) + Na(+)(in) = 1-(9Z-octadecenoyl)-sn-glycero-3-phosphocholine(out) + Na(+)(out). The enzyme catalyses 1-hexadecanoyl-sn-glycero-3-phosphocholine(in) + Na(+)(in) = 1-hexadecanoyl-sn-glycero-3-phosphocholine(out) + Na(+)(out). The catalysed reaction is a 1-acyl-sn-glycero-3-phosphoethanolamine(in) + Na(+)(in) = a 1-acyl-sn-glycero-3-phosphoethanolamine(out) + Na(+)(out). In terms of biological role, sodium-dependent lysophosphatidylcholine (LPC) symporter, which plays an essential role for blood-brain barrier formation and function. Specifically expressed in endothelium of the blood-brain barrier of micro-vessels and transports LPC into the brain. Transport of LPC is essential because it constitutes the major mechanism by which docosahexaenoic acid (DHA), an omega-3 fatty acid that is essential for normal brain growth and cognitive function, enters the brain. Transports LPC carrying long-chain fatty acids such LPC oleate and LPC palmitate with a minimum acyl chain length of 14 carbons. Does not transport docosahexaenoic acid in unesterified fatty acid. The polypeptide is Sodium-dependent lysophosphatidylcholine symporter 1-B (mfsd2ab) (Danio rerio (Zebrafish)).